The sequence spans 597 residues: Nuclear factor erythroid 2-related factor 2 (597 aa).

The short motif at 29-31 (DLG) is the DLG motif element. Position 40 is a phosphoserine; by PKC (Ser-40). The ETGE motif signature appears at 79-82 (ETGE). Ser-207 bears the Phosphoserine mark. Positions 327 to 440 (TMEFNDSDSG…APFTKDKHSS (114 aa)) are disordered. Polar residues predominate over residues 333–345 (SDSGISLNTSPSR). 3 N-linked (Glc) (glycation) lysine glycosylation sites follow: Lys-454, Lys-464, and Lys-479. Positions 489-552 (LIRDIRRRGK…HLLKRRLSTL (64 aa)) constitute a bZIP domain. N-linked (Glc) (glycation) arginine glycosylation occurs at Arg-491. The basic motif stretch occupies residues 491–510 (RDIRRRGKNKVAAQNCRKRK). Positions 514-521 (IVELEQDL) are leucine-zipper. Arg-561 is a glycosylation site (N-linked (Glc) (glycation) arginine). Residues 563 to 597 (EDGKPYSPSEYSLQQTRDGNVFLVPKSKKPDTKKN) are disordered. Lys-566 is a glycosylation site (N-linked (Glc) (glycation) lysine). Residues 571 to 580 (SEYSLQQTRD) are compositionally biased toward polar residues. Residues 583–588 (VFLVPK) are mediates interaction with CHD6 and is necessary to activate transcription. N6-acetyllysine; by CREBBP is present on residues Lys-588 and Lys-591.

Belongs to the bZIP family. CNC subfamily. As to quaternary structure, heterodimer; heterodimerizes with small Maf proteins. Interacts (via the bZIP domain) with MAFG and MAFK; required for binding to antioxidant response elements (AREs) on DNA. Interacts with KEAP1; the interaction is direct and promotes ubiquitination by the BCR(KEAP1) E3 ubiquitin ligase complex. Forms a ternary complex with PGAM5 and KEAP1. Interacts with EEF1D at heat shock promoter elements (HSE). Interacts via its leucine-zipper domain with the coiled-coil domain of PMF1. Interacts with CHD6; involved in activation of the transcription. Interacts with ESRRB; represses NFE2L2 transcriptional activity. Interacts with MOTS-c, a peptide produced by the mitochondrially encoded 12S rRNA MT-RNR1; the interaction occurs in the nucleus following metabolic stress. Ubiquitinated in the cytoplasm by the BCR(KEAP1) E3 ubiquitin ligase complex leading to its degradation. In response to oxidative stress, electrophile metabolites, such as sulforaphane, modify KEAP1, leading to inhibit activity of the BCR(KEAP1) complex, promoting NFE2L2/NRF2 nuclear accumulation and activity. In response to autophagy, the BCR(KEAP1) complex is inactivated. Post-translationally, phosphorylated by EIF2AK3/PERK following unfolded protein response (UPR), promoting dissociation from its cytoplasmic inhibitor KEAP1, followed by its translocation into the nucleus. Phosphorylation of Ser-40 by PKC in response to oxidative stress dissociates NFE2L2 from its cytoplasmic inhibitor KEAP1, promoting its translocation into the nucleus. In terms of processing, acetylation at Lys-588 and Lys-591 increases nuclear localization whereas deacetylation by SIRT1 enhances cytoplasmic presence. Glycation impairs transcription factor activity by preventing heterodimerization with small Maf proteins. Deglycation by FN3K restores activity. Widely expressed. Highest expression in liver, skeletal muscle, luminal cells of the stomach and intestine, lining of the bronchi and alveoli, and in renal tubules; followed by heart, spleen, testis and brain.

The protein resides in the cytoplasm. It is found in the cytosol. Its subcellular location is the nucleus. In terms of biological role, transcription factor that plays a key role in the response to oxidative stress: binds to antioxidant response (ARE) elements present in the promoter region of many cytoprotective genes, such as phase 2 detoxifying enzymes, and promotes their expression, thereby neutralizing reactive electrophiles. In normal conditions, ubiquitinated and degraded in the cytoplasm by the BCR(KEAP1) complex. In response to oxidative stress, electrophile metabolites inhibit activity of the BCR(KEAP1) complex, promoting nuclear accumulation of NFE2L2/NRF2, heterodimerization with one of the small Maf proteins and binding to ARE elements of cytoprotective target genes. The NFE2L2/NRF2 pathway is also activated in response to selective autophagy: autophagy promotes interaction between KEAP1 and SQSTM1/p62 and subsequent inactivation of the BCR(KEAP1) complex, leading to NFE2L2/NRF2 nuclear accumulation and expression of cytoprotective genes. The NFE2L2/NRF2 pathway is also activated during the unfolded protein response (UPR), contributing to redox homeostasis and cell survival following endoplasmic reticulum stress. May also be involved in the transcriptional activation of genes of the beta-globin cluster by mediating enhancer activity of hypersensitive site 2 of the beta-globin locus control region. Also plays an important role in the regulation of the innate immune response. It is a critical regulator of the innate immune response and survival during sepsis by maintaining redox homeostasis and restraint of the dysregulation of pro-inflammatory signaling pathways like MyD88-dependent and -independent and TNF-alpha signaling. Suppresses macrophage inflammatory response by blocking pro-inflammatory cytokine transcription and the induction of IL6. Binds to the proximity of pro-inflammatory genes in macrophages and inhibits RNA Pol II recruitment. The inhibition is independent of the Nrf2-binding motif and reactive oxygen species level. Represses antiviral cytosolic DNA sensing by suppressing the expression of the adapter protein STING1 and decreasing responsiveness to STING1 agonists while increasing susceptibility to infection with DNA viruses. In Mus musculus (Mouse), this protein is Nuclear factor erythroid 2-related factor 2.